The chain runs to 123 residues: Prostate stem cell antigen (123 aa).

Positions 1-20 (MKTVFFLLLATYLALHPGAA) are cleaved as a signal peptide. One can recognise a UPAR/Ly6 domain in the interval 21–95 (LQCYSCTAQM…CCYSDLCNVN (75 aa)). Disulfide bonds link C23/C48, C26/C35, C41/C66, C70/C86, and C87/C92. N-linked (GlcNAc...) asparagine glycosylation occurs at N40. A lipid anchor (GPI-anchor amidated asparagine) is attached at N95. Residues 96–123 (GAHTLKPPTTLGLLTVLCSLLLWGSSRL) constitute a propeptide, removed in mature form.

As to quaternary structure, interacts with CHRNA4. In terms of tissue distribution, predominantly expressed in prostate. Also found in spleen, liver, lung, prostate, kidney and testis. Expressed in brain cortex; expression is increased in transgenic mouse model of Alzheimer disease (at protein level).

Its subcellular location is the cell membrane. May be involved in the regulation of cell proliferation. Its function is as follows. May act as a modulator of nicotinic acetylcholine receptors (nAChRs) activity. In vitro inhibits nicotine-induced signaling probably implicating alpha-3:beta-2- or alpha-7-containing nAChRs. The polypeptide is Prostate stem cell antigen (Psca) (Mus musculus (Mouse)).